The primary structure comprises 561 residues: Arginine--tRNA ligase (561 aa).

The short motif at 128-138 (ANPTGPLHVGH) is the 'HIGH' region element.

Belongs to the class-I aminoacyl-tRNA synthetase family. As to quaternary structure, monomer.

It is found in the cytoplasm. The catalysed reaction is tRNA(Arg) + L-arginine + ATP = L-arginyl-tRNA(Arg) + AMP + diphosphate. This chain is Arginine--tRNA ligase, found in Marinobacter nauticus (strain ATCC 700491 / DSM 11845 / VT8) (Marinobacter aquaeolei).